A 948-amino-acid polypeptide reads, in one-letter code: UvrABC system protein A (948 aa).

33-40 (GLSGSGKS) contacts ATP. The C4-type zinc finger occupies 252–279 (CPICGFSIGELEPRMFSFNSPFGACPTC). 2 consecutive ABC transporter domains span residues 309-587 (WIPT…KKSL) and 607-935 (ASDR…KYLK). Residue 639–646 (GVSGSGKS) coordinates ATP. The segment at 738–764 (CEACKGDGIIKIEMHFLPDVYVPCEVC) adopts a C4-type zinc-finger fold.

Belongs to the ABC transporter superfamily. UvrA family. Forms a heterotetramer with UvrB during the search for lesions.

The protein resides in the cytoplasm. Its function is as follows. The UvrABC repair system catalyzes the recognition and processing of DNA lesions. UvrA is an ATPase and a DNA-binding protein. A damage recognition complex composed of 2 UvrA and 2 UvrB subunits scans DNA for abnormalities. When the presence of a lesion has been verified by UvrB, the UvrA molecules dissociate. The polypeptide is UvrABC system protein A (Staphylococcus aureus (strain N315)).